The sequence spans 233 residues: Large ribosomal subunit protein uL3 (233 aa).

It belongs to the universal ribosomal protein uL3 family. In terms of assembly, part of the 50S ribosomal subunit. Forms a cluster with proteins L14 and L19.

Its function is as follows. One of the primary rRNA binding proteins, it binds directly near the 3'-end of the 23S rRNA, where it nucleates assembly of the 50S subunit. This Ureaplasma urealyticum serovar 10 (strain ATCC 33699 / Western) protein is Large ribosomal subunit protein uL3.